Reading from the N-terminus, the 286-residue chain is Thymidylate synthase (286 aa).

Position 27 (arginine 27) interacts with dUMP. Histidine 57 provides a ligand contact to (6R)-5,10-methylene-5,6,7,8-tetrahydrofolate. Residue 148–149 coordinates dUMP; sequence RR. Catalysis depends on cysteine 168, which acts as the Nucleophile. Residues 188–191, asparagine 199, and 229–231 each bind dUMP; these read RSAD and HLY. Aspartate 191 is a (6R)-5,10-methylene-5,6,7,8-tetrahydrofolate binding site. Alanine 285 is a binding site for (6R)-5,10-methylene-5,6,7,8-tetrahydrofolate.

This sequence belongs to the thymidylate synthase family. Bacterial-type ThyA subfamily. In terms of assembly, homodimer.

Its subcellular location is the cytoplasm. The catalysed reaction is dUMP + (6R)-5,10-methylene-5,6,7,8-tetrahydrofolate = 7,8-dihydrofolate + dTMP. It participates in pyrimidine metabolism; dTTP biosynthesis. In terms of biological role, catalyzes the reductive methylation of 2'-deoxyuridine-5'-monophosphate (dUMP) to 2'-deoxythymidine-5'-monophosphate (dTMP) while utilizing 5,10-methylenetetrahydrofolate (mTHF) as the methyl donor and reductant in the reaction, yielding dihydrofolate (DHF) as a by-product. This enzymatic reaction provides an intracellular de novo source of dTMP, an essential precursor for DNA biosynthesis. This chain is Thymidylate synthase, found in Psychrobacter sp. (strain PRwf-1).